The chain runs to 68 residues: Conotoxin Mi11.1 (68 aa).

A signal peptide spans 1-26 (MMLRLTSVSCFLLVIACLNLFQVVLT). 4 cysteine pairs are disulfide-bonded: cysteine 29/cysteine 43, cysteine 36/cysteine 48, cysteine 42/cysteine 52, and cysteine 47/cysteine 56. Tyrosine 60 bears the Tyrosine amide mark. Residues 64-68 (ATFQE) constitute a propeptide that is removed on maturation.

It belongs to the conotoxin I2 superfamily. As to expression, expressed by the venom duct.

The protein resides in the secreted. This Conus miles (Soldier cone) protein is Conotoxin Mi11.1.